We begin with the raw amino-acid sequence, 469 residues long: ATP synthase subunit beta (469 aa).

Residue 155 to 162 participates in ATP binding; the sequence is GGAGCGKT.

Belongs to the ATPase alpha/beta chains family. As to quaternary structure, F-type ATPases have 2 components, CF(1) - the catalytic core - and CF(0) - the membrane proton channel. CF(1) has five subunits: alpha(3), beta(3), gamma(1), delta(1), epsilon(1). CF(0) has three main subunits: a(1), b(2) and c(9-12). The alpha and beta chains form an alternating ring which encloses part of the gamma chain. CF(1) is attached to CF(0) by a central stalk formed by the gamma and epsilon chains, while a peripheral stalk is formed by the delta and b chains.

The protein localises to the cell inner membrane. The enzyme catalyses ATP + H2O + 4 H(+)(in) = ADP + phosphate + 5 H(+)(out). Its function is as follows. Produces ATP from ADP in the presence of a proton gradient across the membrane. The catalytic sites are hosted primarily by the beta subunits. The sequence is that of ATP synthase subunit beta from Syntrophus aciditrophicus (strain SB).